The chain runs to 361 residues: Peptide chain release factor 1 (361 aa).

N5-methylglutamine is present on Q237. The span at 285–296 (DEKRRSAEESTR) shows a compositional bias: basic and acidic residues. Residues 285 to 305 (DEKRRSAEESTRRNLVSSGDR) form a disordered region.

It belongs to the prokaryotic/mitochondrial release factor family. In terms of processing, methylated by PrmC. Methylation increases the termination efficiency of RF1.

The protein resides in the cytoplasm. Its function is as follows. Peptide chain release factor 1 directs the termination of translation in response to the peptide chain termination codons UAG and UAA. The chain is Peptide chain release factor 1 from Shewanella halifaxensis (strain HAW-EB4).